Reading from the N-terminus, the 156-residue chain is Protein BUNDLE SHEATH DEFECTIVE 2, chloroplastic (156 aa).

The transit peptide at 1 to 41 directs the protein to the chloroplast; sequence MNSAALNARTASVAPQPQACHACKCRQLLSRRVPPAQRQVE. C78, C81, C89, C92, C133, C136, C144, and C147 together coordinate Zn(2+).

Belongs to the BSD2 chaperone family. Interacts with the RuBisCo large subunit (RbcL) assembled as an intermediate complex made of eight RbcL and eight BSD2 subunits.

It is found in the plastid. The protein resides in the chloroplast stroma. Chloroplast chaperone required for RuBisCo biogenesis and translational regulation of the RuBisCo large subunit (RbcL). Stabilizes an end-state assembly intermediate of eight RbcL subunits until the small subunits (RBCSs) become available to produce a complete stable RuBisCo complex containing eight small and eight large subunits. The polypeptide is Protein BUNDLE SHEATH DEFECTIVE 2, chloroplastic (Chlamydomonas reinhardtii (Chlamydomonas smithii)).